We begin with the raw amino-acid sequence, 549 residues long: Glucose-6-phosphate isomerase (549 aa).

3 positions are modified to N6-acetyllysine: lysine 80, lysine 228, and lysine 234. Glutamate 355 (proton donor) is an active-site residue. Active-site residues include histidine 386 and lysine 514.

The protein belongs to the GPI family.

Its subcellular location is the cytoplasm. It catalyses the reaction alpha-D-glucose 6-phosphate = beta-D-fructose 6-phosphate. Its pathway is carbohydrate biosynthesis; gluconeogenesis. The protein operates within carbohydrate degradation; glycolysis; D-glyceraldehyde 3-phosphate and glycerone phosphate from D-glucose: step 2/4. In terms of biological role, catalyzes the reversible isomerization of glucose-6-phosphate to fructose-6-phosphate. The polypeptide is Glucose-6-phosphate isomerase (Escherichia coli O139:H28 (strain E24377A / ETEC)).